We begin with the raw amino-acid sequence, 375 residues long: Protein RecA (375 aa).

ATP is bound at residue 88-95 (GPESSGKT).

Belongs to the RecA family.

Its subcellular location is the cytoplasm. Functionally, can catalyze the hydrolysis of ATP in the presence of single-stranded DNA, the ATP-dependent uptake of single-stranded DNA by duplex DNA, and the ATP-dependent hybridization of homologous single-stranded DNAs. It interacts with LexA causing its activation and leading to its autocatalytic cleavage. In Rhodopirellula baltica (strain DSM 10527 / NCIMB 13988 / SH1), this protein is Protein RecA.